The following is a 352-amino-acid chain: Dihydrorhizobitoxine desaturase (352 aa).

The next 3 helical transmembrane spans lie at 53-73, 89-109, and 204-224; these read LATL…IGAY, LAKN…YPLF, and IGIL…LFWI.

This sequence belongs to the fatty acid desaturase type 1 family.

It localises to the cell inner membrane. The catalysed reaction is dihydrorhizobitoxine + 2 reduced [2Fe-2S]-[ferredoxin] + O2 + 2 H(+) = rhizobitoxine + 2 oxidized [2Fe-2S]-[ferredoxin] + 2 H2O. Involved in the biosynthesis of the nodulation enhancer compound rhizobitoxine. Catalyzes the final step of the pathway, the introduction of a carbon double bond into the C3 position of dihydrorhizobitoxine to produce rhizobitoxine. This is Dihydrorhizobitoxine desaturase from Bradyrhizobium elkanii.